The following is a 224-amino-acid chain: C-reactive protein (224 aa).

A signal peptide spans 1 to 18 (MEKLLCFLVLTSLSHAFG). Q19 carries the post-translational modification Pyrrolidone carboxylic acid. The 202-residue stretch at 23–224 (SRKAFVFPKE…EVFTKPQLWP (202 aa)) folds into the Pentraxin (PTX) domain. Cysteines 54 and 115 form a disulfide. Residues D78, N79, E156, Q157, D158, and Q168 each coordinate Ca(2+).

Belongs to the pentraxin family. In terms of assembly, homopentamer. Pentraxin (or pentaxin) have a discoid arrangement of 5 non-covalently bound subunits. Interacts with FCN1; may regulate monocyte activation by FCN1. Ca(2+) serves as cofactor. In terms of tissue distribution, found in plasma.

Its subcellular location is the secreted. In terms of biological role, displays several functions associated with host defense: it promotes agglutination, bacterial capsular swelling, phagocytosis and complement fixation through its calcium-dependent binding to phosphorylcholine. Can interact with DNA and histones and may scavenge nuclear material released from damaged circulating cells. In Homo sapiens (Human), this protein is C-reactive protein (CRP).